Here is a 116-residue protein sequence, read N- to C-terminus: Peptidyl-tRNA hydrolase (116 aa).

It belongs to the PTH2 family.

Its subcellular location is the cytoplasm. It catalyses the reaction an N-acyl-L-alpha-aminoacyl-tRNA + H2O = an N-acyl-L-amino acid + a tRNA + H(+). Its function is as follows. The natural substrate for this enzyme may be peptidyl-tRNAs which drop off the ribosome during protein synthesis. The protein is Peptidyl-tRNA hydrolase of Methanopyrus kandleri (strain AV19 / DSM 6324 / JCM 9639 / NBRC 100938).